The following is a 589-amino-acid chain: Probable translation initiation factor IF-2 (589 aa).

Residues 3-224 enclose the tr-type G domain; it reads VRSPFVVVMG…AGVSQRFIPR (222 aa). The G1 stretch occupies residues 12–19; that stretch reads GHVDVGKT. 12-19 serves as a coordination point for GTP; the sequence is GHVDVGKT. The interval 37 to 41 is G2; it reads MITQH. The tract at residues 78 to 81 is G3; that stretch reads DTPG. Residues 78–82 and 132–135 contribute to the GTP site; these read DTPGH and NKLD. A G4 region spans residues 132–135; it reads NKLD. The tract at residues 200–202 is G5; it reads SAV.

The protein belongs to the TRAFAC class translation factor GTPase superfamily. Classic translation factor GTPase family. IF-2 subfamily.

Functionally, function in general translation initiation by promoting the binding of the formylmethionine-tRNA to ribosomes. Seems to function along with eIF-2. This Pyrobaculum neutrophilum (strain DSM 2338 / JCM 9278 / NBRC 100436 / V24Sta) (Thermoproteus neutrophilus) protein is Probable translation initiation factor IF-2.